Reading from the N-terminus, the 149-residue chain is Large ribosomal subunit protein uL16c (149 aa).

Belongs to the universal ribosomal protein uL16 family. As to quaternary structure, part of the 50S ribosomal subunit.

The protein resides in the plastid. Its subcellular location is the organellar chromatophore. The polypeptide is Large ribosomal subunit protein uL16c (rpl16) (Paulinella chromatophora).